A 349-amino-acid chain; its full sequence is Phosphoribosylformylglycinamidine cyclo-ligase (349 aa).

Belongs to the AIR synthase family.

It is found in the cytoplasm. It carries out the reaction 2-formamido-N(1)-(5-O-phospho-beta-D-ribosyl)acetamidine + ATP = 5-amino-1-(5-phospho-beta-D-ribosyl)imidazole + ADP + phosphate + H(+). The protein operates within purine metabolism; IMP biosynthesis via de novo pathway; 5-amino-1-(5-phospho-D-ribosyl)imidazole from N(2)-formyl-N(1)-(5-phospho-D-ribosyl)glycinamide: step 2/2. This is Phosphoribosylformylglycinamidine cyclo-ligase from Bordetella pertussis (strain Tohama I / ATCC BAA-589 / NCTC 13251).